The sequence spans 217 residues: MMAAGPRTSLLLAFALLCLPWTQVVGAFPAMSLSGLFANAVLRAQHLHQLAADTFKEFERTYIPEGQRYSIQNTQVAFCFSETIPAPTGKNEAQQKSDLELLRISLLLIQSWLGPLQFLSRVFTNSLVFGTSDRVYEKLKDLEEGILALMRELEDGTPRAGQILKQTYDKFDTNMRSDDALLKNYGLLSCFRKDLHKTETYLRVMKCRRFGEASCAF.

Residues 1–26 (MMAAGPRTSLLLAFALLCLPWTQVVG) form the signal peptide. A Zn(2+)-binding site is contributed by histidine 46. Cysteine 79 and cysteine 190 are oxidised to a cystine. Serine 132 is subject to Phosphoserine. Position 199 (glutamate 199) interacts with Zn(2+). A disulfide bridge connects residues cysteine 207 and cysteine 215.

It belongs to the somatotropin/prolactin family.

It is found in the secreted. Its function is as follows. Plays an important role in growth control. Its major role in stimulating body growth is to stimulate the liver and other tissues to secrete IGF1. It stimulates both the differentiation and proliferation of myoblasts. It also stimulates amino acid uptake and protein synthesis in muscle and other tissues. This chain is Somatotropin (GH1), found in Bos taurus (Bovine).